Reading from the N-terminus, the 196-residue chain is MARGARYRVPLKRRREGKTNYYKRRKLIISGKPRLVVRVLSRTAIVQIAKATPKGDVVIASAHSNELKKYGWKGYRRNTPALYLLGFLAAKKALKQGVTEAIVDIGLHRPVKASRVFAAVKGALDAGLKIPVGDGVLPEDDRVRGEHIANYAKMLKESNPELFKLRFSGYLSAGLDPESLPEHFDSVKQKIEEALQ.

Belongs to the universal ribosomal protein uL18 family. Part of the 50S ribosomal subunit. Contacts the 5S and 23S rRNAs.

This is one of the proteins that bind and probably mediate the attachment of the 5S RNA into the large ribosomal subunit, where it forms part of the central protuberance. This Thermofilum pendens (strain DSM 2475 / Hrk 5) protein is Large ribosomal subunit protein uL18.